The primary structure comprises 520 residues: MKTKELTQSKIEEVSLEILLRHAVKAKHGLEKESMRVNPDGTLSGTTHPIHLGSSLTNHYIKTDFAEPQLEYATHPRPKVEANIRELQDLHIFTIRKLENELIWPFSMPPVLPEEENEIPLGQYGTSHSGRWKTIYRHGLGLRYGRRMQTISGVHYNFSFSKVFLRQFLGKEISNFTKEEISSLYLHVIRNFLRRVHFLTYLTGSSPVFDFTFLPNPGSLKFEKHKNFTLYSTYATSLRMSEIGYTSKVQDTLGIHYNSLEEYVDRMCYAVHTPYPKYVSFSENKDAQLNPNYLQIENEFYSPIRPKQVPKGDERPLDALLQRGIEYIEIRSLDIDPYSPVGVCRSNLAFTQLILLDSLLKVSPSISEEENFSLKENLNSVIWEGRNPELKINVNGSKRNFQEAGAEYSESLRHYAKILDLHTGRRTYQEAIDFQIKKWKNPDKTPSGKLLSEILKRNIEFREKGIELAQENKRMFSYLEYSPGTLMKMEKETIRSFQEKEELEKQEIQTQYPTVKLCNH.

Belongs to the glutamate--cysteine ligase type 1 family. Type 1 subfamily.

It catalyses the reaction L-cysteine + L-glutamate + ATP = gamma-L-glutamyl-L-cysteine + ADP + phosphate + H(+). It functions in the pathway sulfur metabolism; glutathione biosynthesis; glutathione from L-cysteine and L-glutamate: step 1/2. The polypeptide is Glutamate--cysteine ligase (Leptospira interrogans serogroup Icterohaemorrhagiae serovar Lai (strain 56601)).